The sequence spans 413 residues: Probable elongation factor 1-gamma 2 (413 aa).

One can recognise a GST N-terminal domain in the interval 1–82 (MALVMHTYKG…YVSRKNGDNS (82 aa)). Residues 87–215 (SLIEYAHIEQ…AKQTEAVPPV (129 aa)) enclose the GST C-terminal domain. Residues 207–260 (KQTEAVPPVPTKKAPQPAKPKEEPKKAAPVAEAPKPAEEEEAPKPKAKNPLDLL) are disordered. Positions 253–413 (AKNPLDLLPP…EALLDAKCFK (161 aa)) constitute an EF-1-gamma C-terminal domain.

EF-1 is composed of four subunits: alpha, beta, delta, and gamma.

Functionally, probably plays a role in anchoring the complex to other cellular components. This chain is Probable elongation factor 1-gamma 2, found in Arabidopsis thaliana (Mouse-ear cress).